Here is a 659-residue protein sequence, read N- to C-terminus: Exoribonuclease 2 (659 aa).

The RNB domain maps to 189 to 532 (RRDLTALHFV…NHRLIKACLA (344 aa)). The region spanning 577–659 (NPEFRAEVQD…ETRSLIGNLV (83 aa)) is the S1 motif domain.

This sequence belongs to the RNR ribonuclease family. RNase II subfamily.

The protein resides in the cytoplasm. It carries out the reaction Exonucleolytic cleavage in the 3'- to 5'-direction to yield nucleoside 5'-phosphates.. Its function is as follows. Involved in mRNA degradation. Hydrolyzes single-stranded polyribonucleotides processively in the 3' to 5' direction. This Mannheimia succiniciproducens (strain KCTC 0769BP / MBEL55E) protein is Exoribonuclease 2.